The primary structure comprises 692 residues: E3 ubiquitin-protein ligase brl1 (692 aa).

Positions 302–370 (SNEEKIESIN…RNERDSLVAK (69 aa)) form a coiled coil. An RING-type zinc finger spans residues 639 to 679 (CSVCNFSNWKSKLIPNCGHAFCSNCMEPFYEHKTSTCPQCE).

Belongs to the BRE1 family. In terms of assembly, component of the histone H2B ubiquitin ligase complex (HULC) composed of at least brl1, brl2, rhp6 and shf1.

Its subcellular location is the nucleus. The enzyme catalyses S-ubiquitinyl-[E2 ubiquitin-conjugating enzyme]-L-cysteine + [acceptor protein]-L-lysine = [E2 ubiquitin-conjugating enzyme]-L-cysteine + N(6)-ubiquitinyl-[acceptor protein]-L-lysine.. Its pathway is protein modification; protein ubiquitination. Functionally, E3 ubiquitin-protein ligase which belongs to the histone H2B ubiquitin ligase complex (HULC) which mediates monoubiquitination of histone H2B to form H2BK123ub1. H2BK123ub1 gives a specific tag for epigenetic transcriptional activation and is also a prerequisite for H3K4me and H3K79me formation. The polypeptide is E3 ubiquitin-protein ligase brl1 (brl1) (Schizosaccharomyces pombe (strain 972 / ATCC 24843) (Fission yeast)).